Here is a 304-residue protein sequence, read N- to C-terminus: RING-H2 finger protein ATL2 (304 aa).

Residues 30 to 50 traverse the membrane as a helical segment; sequence IMLSAIVILFFVVILMVFLHL. Residues 119-161 form an RING-type; atypical zinc finger; sequence CAVCLSEFEESETGRVLPNCQHTFHVDCIDMWFHSHSTCPLCR. The tract at residues 194 to 304 is disordered; that stretch reads EPSSSSGLTD…DIERGGEESR (111 aa). Residues 227-244 show a composition bias toward basic and acidic residues; the sequence is VPRRTFSEFEDELTRRDS. Positions 283 to 293 are enriched in polar residues; that stretch reads PTLSCRIQMTE. Residues 295 to 304 show a composition bias toward basic and acidic residues; that stretch reads DIERGGEESR.

The protein belongs to the RING-type zinc finger family. ATL subfamily. As to expression, preferentially expressed around the apical meristem region.

Its subcellular location is the membrane. The catalysed reaction is S-ubiquitinyl-[E2 ubiquitin-conjugating enzyme]-L-cysteine + [acceptor protein]-L-lysine = [E2 ubiquitin-conjugating enzyme]-L-cysteine + N(6)-ubiquitinyl-[acceptor protein]-L-lysine.. The protein operates within protein modification; protein ubiquitination. Its function is as follows. May be involved in the early steps of the plant defense signaling pathway. This is RING-H2 finger protein ATL2 (ATL2) from Arabidopsis thaliana (Mouse-ear cress).